A 106-amino-acid polypeptide reads, in one-letter code: Phosphoribosyl-ATP pyrophosphatase (106 aa).

Belongs to the PRA-PH family.

Its subcellular location is the cytoplasm. It catalyses the reaction 1-(5-phospho-beta-D-ribosyl)-ATP + H2O = 1-(5-phospho-beta-D-ribosyl)-5'-AMP + diphosphate + H(+). Its pathway is amino-acid biosynthesis; L-histidine biosynthesis; L-histidine from 5-phospho-alpha-D-ribose 1-diphosphate: step 2/9. The protein is Phosphoribosyl-ATP pyrophosphatase of Limosilactobacillus fermentum (strain NBRC 3956 / LMG 18251) (Lactobacillus fermentum).